The sequence spans 314 residues: R2-like ligand binding oxidase (314 aa).

Mn(2+) is bound by residues E68, E101, and H104. The 3-(O4'-tyrosyl)-valine (Val-Tyr) cross-link spans V71–Y162. Residue E101 coordinates Fe cation. Residues E167, E202, and H205 each coordinate Fe cation.

Belongs to the ribonucleoside diphosphate reductase small chain family. R2-like ligand binding oxidase subfamily. Homodimer. It depends on Fe cation as a cofactor. Mn(2+) is required as a cofactor.

In terms of biological role, probable oxidase that might be involved in lipid metabolism. This Mycobacterium tuberculosis (strain ATCC 25177 / H37Ra) protein is R2-like ligand binding oxidase.